We begin with the raw amino-acid sequence, 147 residues long: Large ribosomal subunit protein bL9 (147 aa).

It belongs to the bacterial ribosomal protein bL9 family.

Functionally, binds to the 23S rRNA. In Campylobacter jejuni subsp. jejuni serotype O:23/36 (strain 81-176), this protein is Large ribosomal subunit protein bL9.